A 298-amino-acid chain; its full sequence is ADP/ATP translocase 3 (298 aa).

At methionine 1 the chain carries N-acetylmethionine. At 1–7 (MTEQAIS) the chain is on the mitochondrial intermembrane side. Threonine 2 bears the N-acetylthreonine; in ADP/ATP translocase 3, N-terminally processed mark. A Solcar 1 repeat occupies 6–98 (ISFAKDFLAG…FAFKDKYKQI (93 aa)). Residues 8 to 37 (FAKDFLAGGIAAAISKTAVAPIERVKLLLQ) form a helical membrane-spanning segment. Residues 38-74 (VQHASKQIAADKQYKGIVDCIVRIPKEQGVLSFWRGN) are Mitochondrial matrix-facing. An N6,N6,N6-trimethyllysine modification is found at lysine 52. A helical membrane pass occupies residues 75-99 (LANVIRYFPTQALNFAFKDKYKQIF). Arginine 80 and lysine 92 together coordinate ADP. Over 100-109 (LGGVDKHTQF) the chain is Mitochondrial intermembrane. The residue at position 105 (lysine 105) is an N6-acetyllysine. Residues 110-130 (WRYFAGNLASGGAAGATSLCF) form a helical membrane-spanning segment. Solcar repeat units lie at residues 111-201 (RYFA…AKGM) and 212-297 (VSWM…LKKV). At 131-178 (VYPLDFARTRLAADVGKSATEREFKGLGDCLVKITKSDGIRGLYQGFN) the chain is on the mitochondrial matrix side. A helical membrane pass occupies residues 179 to 199 (VSVQGIIIYRAAYFGVYGTAK). The Mitochondrial intermembrane segment spans residues 200-210 (GMLPDPRNTHI). Residues 211 to 231 (VVSWMIAQTVTAVAGVFSYPF) traverse the membrane as a helical segment. At 232–273 (DTVRRRMMMQSGRKGADIMYKGTLDCWRKIFKDEGGKAFFKG) the chain is on the mitochondrial matrix side. Arginine 235 provides a ligand contact to ADP. Positions 235 to 240 (RRRMMM) are important for transport activity. The Nucleotide carrier signature motif signature appears at 235 to 240 (RRRMMM). Lysine 268 bears the N6-acetyllysine mark. The chain crosses the membrane as a helical span at residues 274–291 (AWSNVLRGMGGAFVLVLY). At 292–298 (DELKKVI) the chain is on the mitochondrial intermembrane side.

Belongs to the mitochondrial carrier (TC 2.A.29) family. As to quaternary structure, monomer. Found in a complex with ARL2, ARL2BP and SLC25A6/ANT3. Trimethylated by ANTKMT at Lys-52.

Its subcellular location is the mitochondrion inner membrane. It is found in the membrane. It carries out the reaction ADP(in) + ATP(out) = ADP(out) + ATP(in). The catalysed reaction is H(+)(in) = H(+)(out). Its activity is regulated as follows. The matrix-open state (m-state) is inhibited by the membrane-permeable bongkrekic acid (BKA). The cytoplasmic-open state (c-state) is inhibited by the membrane-impermeable toxic inhibitor carboxyatractyloside (CATR). Proton transporter activity is inhibited by ADP:ATP antiporter activity. ADP:ATP antiporter that mediates import of ADP into the mitochondrial matrix for ATP synthesis, and export of ATP out to fuel the cell. Cycles between the cytoplasmic-open state (c-state) and the matrix-open state (m-state): operates by the alternating access mechanism with a single substrate-binding site intermittently exposed to either the cytosolic (c-state) or matrix (m-state) side of the inner mitochondrial membrane. In addition to its ADP:ATP antiporter activity, also involved in mitochondrial uncoupling and mitochondrial permeability transition pore (mPTP) activity. Plays a role in mitochondrial uncoupling by acting as a proton transporter: proton transport uncouples the proton flows via the electron transport chain and ATP synthase to reduce the efficiency of ATP production and cause mitochondrial thermogenesis. Proton transporter activity is inhibited by ADP:ATP antiporter activity, suggesting that SLC25A6/ANT3 acts as a master regulator of mitochondrial energy output by maintaining a delicate balance between ATP production (ADP:ATP antiporter activity) and thermogenesis (proton transporter activity). Proton transporter activity requires free fatty acids as cofactor, but does not transport it. Also plays a key role in mPTP opening, a non-specific pore that enables free passage of the mitochondrial membranes to solutes of up to 1.5 kDa, and which contributes to cell death. It is however unclear if SLC25A6/ANT3 constitutes a pore-forming component of mPTP or regulates it. This chain is ADP/ATP translocase 3, found in Sus scrofa (Pig).